A 237-amino-acid chain; its full sequence is Phosphoribosylaminoimidazole-succinocarboxamide synthase (237 aa).

The protein belongs to the SAICAR synthetase family.

It carries out the reaction 5-amino-1-(5-phospho-D-ribosyl)imidazole-4-carboxylate + L-aspartate + ATP = (2S)-2-[5-amino-1-(5-phospho-beta-D-ribosyl)imidazole-4-carboxamido]succinate + ADP + phosphate + 2 H(+). The protein operates within purine metabolism; IMP biosynthesis via de novo pathway; 5-amino-1-(5-phospho-D-ribosyl)imidazole-4-carboxamide from 5-amino-1-(5-phospho-D-ribosyl)imidazole-4-carboxylate: step 1/2. The sequence is that of Phosphoribosylaminoimidazole-succinocarboxamide synthase from Shigella sonnei (strain Ss046).